The chain runs to 713 residues: Methionine--tRNA ligase (713 aa).

Residues 31-41 (PYANGSIHLGH) carry the 'HIGH' region motif. Zn(2+) is bound by residues Cys162, Cys165, Cys175, and Cys178. The short motif at 348-352 (KMSKS) is the 'KMSKS' region element. Lys351 contributes to the ATP binding site. One can recognise a tRNA-binding domain in the interval 609-713 (DFAKIDLRIV…DGAKAGMRVK (105 aa)).

This sequence belongs to the class-I aminoacyl-tRNA synthetase family. MetG type 1 subfamily. In terms of assembly, homodimer. Zn(2+) serves as cofactor.

It localises to the cytoplasm. The catalysed reaction is tRNA(Met) + L-methionine + ATP = L-methionyl-tRNA(Met) + AMP + diphosphate. Functionally, is required not only for elongation of protein synthesis but also for the initiation of all mRNA translation through initiator tRNA(fMet) aminoacylation. In Colwellia psychrerythraea (strain 34H / ATCC BAA-681) (Vibrio psychroerythus), this protein is Methionine--tRNA ligase.